Reading from the N-terminus, the 188-residue chain is Accessory gene regulator protein B (188 aa).

Transmembrane regions (helical) follow at residues 49 to 69 (VALI…YFLV), 100 to 122 (VYFQ…LIIY), 143 to 163 (LLSI…PEPF), and 164 to 184 (KQLI…IFFP).

The protein belongs to the AgrB family.

Its subcellular location is the cell membrane. Functionally, essential for the production of a quorum sensing system signal molecule, the autoinducing peptide (AIP). This quorum sensing system is responsible for the regulation of the expression of virulence factor genes. Involved in the proteolytic processing of AgrD, the precursor of AIP. The sequence is that of Accessory gene regulator protein B from Staphylococcus haemolyticus (strain JCSC1435).